A 340-amino-acid polypeptide reads, in one-letter code: DNA-directed RNA polymerase subunit alpha (340 aa).

The interval 1–236 (MSVIQKNWQE…DQLQLFINFE (236 aa)) is alpha N-terminal domain (alpha-NTD). Residues 252–340 (FNKNLLRKVD…DLAKKLEEPY (89 aa)) form an alpha C-terminal domain (alpha-CTD) region.

The protein belongs to the RNA polymerase alpha chain family. As to quaternary structure, homodimer. The RNAP catalytic core consists of 2 alpha, 1 beta, 1 beta' and 1 omega subunit. When a sigma factor is associated with the core the holoenzyme is formed, which can initiate transcription.

The enzyme catalyses RNA(n) + a ribonucleoside 5'-triphosphate = RNA(n+1) + diphosphate. Its function is as follows. DNA-dependent RNA polymerase catalyzes the transcription of DNA into RNA using the four ribonucleoside triphosphates as substrates. The protein is DNA-directed RNA polymerase subunit alpha of Rhodospirillum rubrum (strain ATCC 11170 / ATH 1.1.1 / DSM 467 / LMG 4362 / NCIMB 8255 / S1).